We begin with the raw amino-acid sequence, 132 residues long: Large ribosomal subunit protein uL24 (132 aa).

It belongs to the universal ribosomal protein uL24 family. Part of the 50S ribosomal subunit.

Functionally, one of two assembly initiator proteins, it binds directly to the 5'-end of the 23S rRNA, where it nucleates assembly of the 50S subunit. Its function is as follows. One of the proteins that surrounds the polypeptide exit tunnel on the outside of the subunit. The chain is Large ribosomal subunit protein uL24 from Synechococcus sp. (strain JA-3-3Ab) (Cyanobacteria bacterium Yellowstone A-Prime).